Reading from the N-terminus, the 37-residue chain is Cytochrome b6-f complex subunit 5 (37 aa).

Residues 5 to 25 (LLSGIVLGLIPVTLAGLFVTA) form a helical membrane-spanning segment.

It belongs to the PetG family. As to quaternary structure, the 4 large subunits of the cytochrome b6-f complex are cytochrome b6, subunit IV (17 kDa polypeptide, PetD), cytochrome f and the Rieske protein, while the 4 small subunits are PetG, PetL, PetM and PetN. The complex functions as a dimer.

The protein resides in the plastid. It is found in the chloroplast thylakoid membrane. In terms of biological role, component of the cytochrome b6-f complex, which mediates electron transfer between photosystem II (PSII) and photosystem I (PSI), cyclic electron flow around PSI, and state transitions. PetG is required for either the stability or assembly of the cytochrome b6-f complex. The protein is Cytochrome b6-f complex subunit 5 of Chlorokybus atmophyticus (Soil alga).